Reading from the N-terminus, the 318-residue chain is UDP-N-acetylenolpyruvoylglucosamine reductase (318 aa).

The 167-residue stretch at 38–204 (IGGICPVVVE…LGIEILLKEG (167 aa)) folds into the FAD-binding PCMH-type domain. Arginine 182 is a catalytic residue. A disordered region spans residues 212 to 232 (SLKDKRDRRNSSQPENKKSAG). Basic and acidic residues predominate over residues 213–229 (LKDKRDRRNSSQPENKK). Serine 233 (proton donor) is an active-site residue. The active site involves glutamate 310.

The protein belongs to the MurB family. FAD is required as a cofactor.

The protein resides in the cytoplasm. It catalyses the reaction UDP-N-acetyl-alpha-D-muramate + NADP(+) = UDP-N-acetyl-3-O-(1-carboxyvinyl)-alpha-D-glucosamine + NADPH + H(+). The protein operates within cell wall biogenesis; peptidoglycan biosynthesis. Its function is as follows. Cell wall formation. The sequence is that of UDP-N-acetylenolpyruvoylglucosamine reductase from Leptospira borgpetersenii serovar Hardjo-bovis (strain L550).